A 544-amino-acid chain; its full sequence is Chaperonin GroEL (544 aa).

ATP contacts are provided by residues 29–32 (TLGP), 86–90 (DGTTT), glycine 413, 476–478 (NAA), and aspartate 492.

This sequence belongs to the chaperonin (HSP60) family. In terms of assembly, forms a cylinder of 14 subunits composed of two heptameric rings stacked back-to-back. Interacts with the co-chaperonin GroES.

It localises to the cytoplasm. It carries out the reaction ATP + H2O + a folded polypeptide = ADP + phosphate + an unfolded polypeptide.. Its function is as follows. Together with its co-chaperonin GroES, plays an essential role in assisting protein folding. The GroEL-GroES system forms a nano-cage that allows encapsulation of the non-native substrate proteins and provides a physical environment optimized to promote and accelerate protein folding. The protein is Chaperonin GroEL of Bacillus pumilus (strain SAFR-032).